A 534-amino-acid chain; its full sequence is tRNA uridine(34) acetyltransferase (534 aa).

The segment at 70–330 is radical S-adenosyl-L-methionine (rSAM); that stretch reads KPVRTISGVA…GEFKPYREEE (261 aa). Residues 73 to 344 form the Radical SAM core domain; sequence RTISGVAVVA…ISYAKSIMPK (272 aa). Positions 90, 95, and 98 each coordinate [4Fe-4S] cluster. K150 is a binding site for acetyl-CoA. C384 and C389 are disulfide-bonded. Residues 387–534 enclose the N-acetyltransferase domain; that stretch reads IRCREVGHVY…RVGAYMGKEL (148 aa). Residues 461-464, 485-487, and Y518 each bind acetyl-CoA; these read QLHV and YGR.

Belongs to the ELP3 family. [4Fe-4S] cluster is required as a cofactor.

It catalyses the reaction uridine(34) in tRNA + acetyl-CoA + S-adenosyl-L-methionine + H2O = 5-(carboxymethyl)uridine(34) in tRNA + 5'-deoxyadenosine + L-methionine + CoA + 2 H(+). Its pathway is tRNA modification. Its function is as follows. tRNA uridine(34) acetyltransferase, which mediates formation of carboxymethyluridine in the wobble base at position 34 in tRNAs. The proposed mechanism is the following: (i) recruits S-adenosyl-L-methionine and cleaves it to generate a 5'-deoxyadenosine radical (5'-dA) in the radical S-adenosyl-L-methionine (rSAM) region, (ii) hydrolyzes acetyl-CoA in the N-acetyltransferase domain and (iii) an acetyl radical is formed by the products of the two domains and (iv) is transferred onto the C5 position of uridine(34) in the bound tRNA molecule. Does not show protein lysine acetyltransferase activity. This chain is tRNA uridine(34) acetyltransferase, found in Methanocaldococcus infernus (strain DSM 11812 / JCM 15783 / ME).